The chain runs to 126 residues: MIPGEIITLPEDQEIILNAGRPTLDIMVSNKGDRPIQVGSHYHFLEVNEDLEFYEIDSESKNFIFIDRSNLHNKTRGMRLNIPAGTAVRFEPGDIKKVQLVPLAGTREIYGFNGKINGQLDSSVEQ.

Belongs to the urease beta subunit family. In terms of assembly, heterotrimer of UreA (gamma), UreB (beta) and UreC (alpha) subunits. Three heterotrimers associate to form the active enzyme.

The protein localises to the cytoplasm. It catalyses the reaction urea + 2 H2O + H(+) = hydrogencarbonate + 2 NH4(+). It functions in the pathway nitrogen metabolism; urea degradation; CO(2) and NH(3) from urea (urease route): step 1/1. The chain is Urease subunit beta from Gloeothece citriformis (strain PCC 7424) (Cyanothece sp. (strain PCC 7424)).